A 297-amino-acid chain; its full sequence is Mitochondrial nicotinamide adenine dinucleotide transporter SLC25A51 (297 aa).

A compositionally biased stretch (basic and acidic residues) spans Met-1 to Pro-11. The segment at Met-1–Asp-20 is disordered. 3 Solcar repeats span residues Val-28–Leu-108, Pro-116–His-200, and Asn-213–Val-296. The next 6 helical transmembrane spans lie at Cys-36–Phe-56, Leu-85–Leu-105, Pro-116–Phe-135, Ile-179–Glu-199, Phe-215–Val-235, and Leu-268–Thr-289.

Belongs to the mitochondrial carrier (TC 2.A.29) family.

Its subcellular location is the mitochondrion inner membrane. The catalysed reaction is NAD(+)(in) = NAD(+)(out). Its function is as follows. Mitochondrial membrane carrier protein that mediates the import of NAD(+) into mitochondria. Mitochondrial NAD(+) is required for glycolysis and mitochondrial respiration. Compared to SLC25A52, SLC25A51-mediated transport is essential for the import of NAD(+) in mitochondria. The transport mechanism, uniport or antiport, its electrogenicity and substrate selectivity, remain to be elucidated. This is Mitochondrial nicotinamide adenine dinucleotide transporter SLC25A51 from Homo sapiens (Human).